The sequence spans 371 residues: Chaperone protein DnaJ (371 aa).

The J domain maps to 5 to 69 (DYYEVLGLSK…QKRAQYDQFG (65 aa)). The CR-type zinc finger occupies 133 to 215 (GKELNVEIPV…CHGSGKVRKR (83 aa)). Cys146, Cys149, Cys163, Cys166, Cys189, Cys192, Cys203, and Cys206 together coordinate Zn(2+). CXXCXGXG motif repeat units follow at residues 146-153 (CDTCKGSG), 163-170 (CKHCSGSG), 189-196 (CGHCSGTG), and 203-210 (CTTCHGSG).

This sequence belongs to the DnaJ family. As to quaternary structure, homodimer. Zn(2+) serves as cofactor.

It is found in the cytoplasm. Functionally, participates actively in the response to hyperosmotic and heat shock by preventing the aggregation of stress-denatured proteins and by disaggregating proteins, also in an autonomous, DnaK-independent fashion. Unfolded proteins bind initially to DnaJ; upon interaction with the DnaJ-bound protein, DnaK hydrolyzes its bound ATP, resulting in the formation of a stable complex. GrpE releases ADP from DnaK; ATP binding to DnaK triggers the release of the substrate protein, thus completing the reaction cycle. Several rounds of ATP-dependent interactions between DnaJ, DnaK and GrpE are required for fully efficient folding. Also involved, together with DnaK and GrpE, in the DNA replication of plasmids through activation of initiation proteins. In Bacillus cereus (strain G9842), this protein is Chaperone protein DnaJ.